The chain runs to 304 residues: UDP-3-O-acyl-N-acetylglucosamine deacetylase (304 aa).

Zn(2+) contacts are provided by H79, H238, and D242. Residue H265 is the Proton donor of the active site.

It belongs to the LpxC family. Zn(2+) is required as a cofactor.

It carries out the reaction a UDP-3-O-[(3R)-3-hydroxyacyl]-N-acetyl-alpha-D-glucosamine + H2O = a UDP-3-O-[(3R)-3-hydroxyacyl]-alpha-D-glucosamine + acetate. It functions in the pathway glycolipid biosynthesis; lipid IV(A) biosynthesis; lipid IV(A) from (3R)-3-hydroxytetradecanoyl-[acyl-carrier-protein] and UDP-N-acetyl-alpha-D-glucosamine: step 2/6. Its function is as follows. Catalyzes the hydrolysis of UDP-3-O-myristoyl-N-acetylglucosamine to form UDP-3-O-myristoylglucosamine and acetate, the committed step in lipid A biosynthesis. The sequence is that of UDP-3-O-acyl-N-acetylglucosamine deacetylase from Pseudoalteromonas atlantica (strain T6c / ATCC BAA-1087).